Here is a 342-residue protein sequence, read N- to C-terminus: tRNA N6-adenosine threonylcarbamoyltransferase (342 aa).

2 residues coordinate Fe cation: His115 and His119. Residues 138–142 (IISGG), Asp171, Gly184, Asp188, and Asn276 each bind substrate. Asp304 provides a ligand contact to Fe cation.

The protein belongs to the KAE1 / TsaD family. It depends on Fe(2+) as a cofactor.

It is found in the cytoplasm. The enzyme catalyses L-threonylcarbamoyladenylate + adenosine(37) in tRNA = N(6)-L-threonylcarbamoyladenosine(37) in tRNA + AMP + H(+). Required for the formation of a threonylcarbamoyl group on adenosine at position 37 (t(6)A37) in tRNAs that read codons beginning with adenine. Is involved in the transfer of the threonylcarbamoyl moiety of threonylcarbamoyl-AMP (TC-AMP) to the N6 group of A37, together with TsaE and TsaB. TsaD likely plays a direct catalytic role in this reaction. The protein is tRNA N6-adenosine threonylcarbamoyltransferase of Endomicrobium trichonymphae.